The sequence spans 612 residues: Dihydroxy-acid dehydratase (612 aa).

Aspartate 81 provides a ligand contact to Mg(2+). Cysteine 122 provides a ligand contact to [2Fe-2S] cluster. Mg(2+)-binding residues include aspartate 123 and lysine 124. The residue at position 124 (lysine 124) is an N6-carboxylysine. Cysteine 193 contributes to the [2Fe-2S] cluster binding site. Glutamate 489 is a binding site for Mg(2+). Catalysis depends on serine 515, which acts as the Proton acceptor.

It belongs to the IlvD/Edd family. In terms of assembly, homodimer. [2Fe-2S] cluster is required as a cofactor. Requires Mg(2+) as cofactor.

It catalyses the reaction (2R)-2,3-dihydroxy-3-methylbutanoate = 3-methyl-2-oxobutanoate + H2O. The enzyme catalyses (2R,3R)-2,3-dihydroxy-3-methylpentanoate = (S)-3-methyl-2-oxopentanoate + H2O. It participates in amino-acid biosynthesis; L-isoleucine biosynthesis; L-isoleucine from 2-oxobutanoate: step 3/4. Its pathway is amino-acid biosynthesis; L-valine biosynthesis; L-valine from pyruvate: step 3/4. Functions in the biosynthesis of branched-chain amino acids. Catalyzes the dehydration of (2R,3R)-2,3-dihydroxy-3-methylpentanoate (2,3-dihydroxy-3-methylvalerate) into 2-oxo-3-methylpentanoate (2-oxo-3-methylvalerate) and of (2R)-2,3-dihydroxy-3-methylbutanoate (2,3-dihydroxyisovalerate) into 2-oxo-3-methylbutanoate (2-oxoisovalerate), the penultimate precursor to L-isoleucine and L-valine, respectively. This is Dihydroxy-acid dehydratase from Pseudomonas paraeruginosa (strain DSM 24068 / PA7) (Pseudomonas aeruginosa (strain PA7)).